Reading from the N-terminus, the 173-residue chain is Crossover junction endodeoxyribonuclease RuvC (173 aa).

Residues D8, E67, and D139 contribute to the active site. Mg(2+) contacts are provided by D8, E67, and D139.

The protein belongs to the RuvC family. In terms of assembly, homodimer which binds Holliday junction (HJ) DNA. The HJ becomes 2-fold symmetrical on binding to RuvC with unstacked arms; it has a different conformation from HJ DNA in complex with RuvA. In the full resolvosome a probable DNA-RuvA(4)-RuvB(12)-RuvC(2) complex forms which resolves the HJ. Requires Mg(2+) as cofactor.

The protein resides in the cytoplasm. The catalysed reaction is Endonucleolytic cleavage at a junction such as a reciprocal single-stranded crossover between two homologous DNA duplexes (Holliday junction).. Functionally, the RuvA-RuvB-RuvC complex processes Holliday junction (HJ) DNA during genetic recombination and DNA repair. Endonuclease that resolves HJ intermediates. Cleaves cruciform DNA by making single-stranded nicks across the HJ at symmetrical positions within the homologous arms, yielding a 5'-phosphate and a 3'-hydroxyl group; requires a central core of homology in the junction. The consensus cleavage sequence is 5'-(A/T)TT(C/G)-3'. Cleavage occurs on the 3'-side of the TT dinucleotide at the point of strand exchange. HJ branch migration catalyzed by RuvA-RuvB allows RuvC to scan DNA until it finds its consensus sequence, where it cleaves and resolves the cruciform DNA. The protein is Crossover junction endodeoxyribonuclease RuvC of Salmonella paratyphi C (strain RKS4594).